The primary structure comprises 459 residues: ADP-specific phosphofructokinase (459 aa).

Positions 1–457 (MMEFLKDFQK…FASYLSLLKR (457 aa)) constitute an ADPK domain. Mg(2+) contacts are provided by Glu268, Glu298, and Asp441. The active-site Proton acceptor is the Asp441.

Belongs to the carbohydrate kinase PfkC family. Mg(2+) serves as cofactor.

The protein localises to the cytoplasm. The enzyme catalyses beta-D-fructose 6-phosphate + ADP = beta-D-fructose 1,6-bisphosphate + AMP + H(+). It participates in carbohydrate degradation; glycolysis. In terms of biological role, catalyzes the phosphorylation of fructose 6-phosphate to fructose 1,6-bisphosphate using ADP as the phosphate donor. The protein is ADP-specific phosphofructokinase of Thermococcus litoralis.